The sequence spans 355 residues: C-C chemokine receptor type 8 (355 aa).

Residues 1 to 35 lie on the Extracellular side of the membrane; the sequence is MDYTLDLSVTTVTDYYYPDIFSSPCDAELIQTNGK. A helical membrane pass occupies residues 36–63; sequence LLLAVFYCLLFVFSLLGNSLVILVLVVC. Residues 64–73 lie on the Cytoplasmic side of the membrane; that stretch reads KKLRSITDVY. A helical transmembrane segment spans residues 74–93; the sequence is LLNLALSDLLFVFSFPFQTY. Residues 94–107 lie on the Extracellular side of the membrane; it reads YLLDQWVFGTVMCK. The cysteines at positions 106 and 183 are disulfide-linked. Residues 108-129 form a helical membrane-spanning segment; that stretch reads VVSGFYYIGFYSSMFFITLMSV. The Cytoplasmic segment spans residues 130–146; that stretch reads DRYLAVVHAVYALKVRT. Residues 147-171 traverse the membrane as a helical segment; sequence IRMGTTLCLAVWLTAIMATIPLLVF. Residues 172 to 202 are Extracellular-facing; that stretch reads YQVASEDGVLQCYSFYNQQTLKWKIFTNFKM. A helical transmembrane segment spans residues 203–222; the sequence is NILGLLIPFTIFMFCYIKIL. The Cytoplasmic segment spans residues 223–238; that stretch reads HQLKRCQNHNKTKAIR. The helical transmembrane segment at 239 to 263 threads the bilayer; sequence LVLIVVIASLLFWVPFNVVLFLTSL. The Extracellular portion of the chain corresponds to 264–280; sequence HSMHILDGCSISQQLTY. Residues 281–304 traverse the membrane as a helical segment; the sequence is ATHVTEIISFTHCCVNPVIYAFVG. The Cytoplasmic portion of the chain corresponds to 305 to 355; the sequence is EKFKKHLSEIFQKSCSQIFNYLGRQMPRESCEKSSSCQQHSSRSSSVDYIL.

Belongs to the G-protein coupled receptor 1 family.

Its subcellular location is the cell membrane. Receptor for the chemokine CCL1/SCYA1/I-309. May regulate monocyte chemotaxis and thymic cell line apoptosis. Alternative coreceptor with CD4 for HIV-1 infection. This is C-C chemokine receptor type 8 (CCR8) from Homo sapiens (Human).